The sequence spans 194 residues: Imidazoleglycerol-phosphate dehydratase (194 aa).

The protein belongs to the imidazoleglycerol-phosphate dehydratase family.

Its subcellular location is the cytoplasm. It carries out the reaction D-erythro-1-(imidazol-4-yl)glycerol 3-phosphate = 3-(imidazol-4-yl)-2-oxopropyl phosphate + H2O. Its pathway is amino-acid biosynthesis; L-histidine biosynthesis; L-histidine from 5-phospho-alpha-D-ribose 1-diphosphate: step 6/9. This Lacticaseibacillus casei (strain BL23) (Lactobacillus casei) protein is Imidazoleglycerol-phosphate dehydratase.